A 495-amino-acid polypeptide reads, in one-letter code: ATP synthase subunit beta, chloroplastic (495 aa).

Residue 172–179 (GGAGVGKT) coordinates ATP.

This sequence belongs to the ATPase alpha/beta chains family. As to quaternary structure, F-type ATPases have 2 components, CF(1) - the catalytic core - and CF(0) - the membrane proton channel. CF(1) has five subunits: alpha(3), beta(3), gamma(1), delta(1), epsilon(1). CF(0) has four main subunits: a(1), b(1), b'(1) and c(9-12).

It is found in the plastid. It localises to the chloroplast thylakoid membrane. The enzyme catalyses ATP + H2O + 4 H(+)(in) = ADP + phosphate + 5 H(+)(out). Its function is as follows. Produces ATP from ADP in the presence of a proton gradient across the membrane. The catalytic sites are hosted primarily by the beta subunits. The protein is ATP synthase subunit beta, chloroplastic of Bowiea volubilis (Climbing onion).